Here is a 401-residue protein sequence, read N- to C-terminus: Argininosuccinate synthase (401 aa).

9–17 (AYSGGLDTS) contributes to the ATP binding site. Tyrosine 86 serves as a coordination point for L-citrulline. Glycine 116 contributes to the ATP binding site. Residues threonine 118, asparagine 122, and aspartate 123 each coordinate L-aspartate. Asparagine 122 provides a ligand contact to L-citrulline. L-citrulline contacts are provided by arginine 126, serine 174, serine 183, glutamate 259, and tyrosine 271.

The protein belongs to the argininosuccinate synthase family. Type 1 subfamily. As to quaternary structure, homotetramer.

It is found in the cytoplasm. The catalysed reaction is L-citrulline + L-aspartate + ATP = 2-(N(omega)-L-arginino)succinate + AMP + diphosphate + H(+). It functions in the pathway amino-acid biosynthesis; L-arginine biosynthesis; L-arginine from L-ornithine and carbamoyl phosphate: step 2/3. This chain is Argininosuccinate synthase, found in Bacillus thuringiensis subsp. konkukian (strain 97-27).